The primary structure comprises 194 residues: Interleukin-18 (194 aa).

The propeptide occupies 1 to 36 (MAAMSEEGSCVNFKEMMFIDNTLYLIPEDNGDLESD).

This sequence belongs to the IL-1 family. In terms of assembly, forms a ternary complex with ligand-binding receptor subunit IL18R1 and signaling receptor subunit IL18RAP at the plasma membrane. Mature IL18 first binds to IL18R1 forming a low affinity binary complex, which then interacts with IL18RAP to form a high affinity ternary complex that signals inside the cell. Interacts with cargo receptor TMED10; the interaction mediates the translocation from the cytoplasm into the ERGIC (endoplasmic reticulum-Golgi intermediate compartment) and thereby secretion. Post-translationally, the pro-IL-18 precursor is processed by CASP1 to yield its mature, active form. The pro-IL-18 precursor is however not processed by Casp4/Casp11 in rodents. The pro-IL-18 precursor features autoinhibitory interactions between the propeptide and the post-cleavage-site region, preventing recognition by the IL18R1 receptor. Processing by CASP1 induces conformational changes to generate critical receptor-binding sites. The mature form is then secreted and released in the extracellular milieu by passing through the gasdermin-D (GSDMD) pore. In contrast, cleavage by CASP3 inactivates IL18.

It is found in the cytoplasm. The protein resides in the cytosol. It localises to the secreted. Pro-inflammatory cytokine primarily involved in epithelial barrier repair, polarized T-helper 1 (Th1) cell and natural killer (NK) cell immune responses. Upon binding to IL18R1 and IL18RAP, forms a signaling ternary complex which activates NF-kappa-B, triggering synthesis of inflammatory mediators. Synergizes with IL12/interleukin-12 to induce IFNG synthesis from T-helper 1 (Th1) cells and natural killer (NK) cells. Involved in transduction of inflammation downstream of pyroptosis: its mature form is specifically released in the extracellular milieu by passing through the gasdermin-D (GSDMD) pore. In Rattus norvegicus (Rat), this protein is Interleukin-18 (Il18).